A 46-amino-acid chain; its full sequence is Large ribosomal subunit protein bL34 (46 aa).

The protein belongs to the bacterial ribosomal protein bL34 family.

This chain is Large ribosomal subunit protein bL34, found in Trichodesmium erythraeum (strain IMS101).